Here is a 369-residue protein sequence, read N- to C-terminus: Trichocyst matrix protein T1-B (369 aa).

The N-terminal stretch at 1-16 is a signal peptide; sequence MYKLAVCTLLILSVTA. A propeptide spanning residues 17–55 is cleaved from the precursor; it reads IDVTNSVWTSHDQKAFAQIKQSGWGNFILNFGELHLQTG. The stretch at 56 to 180 forms a coiled coil; sequence GILAELNTEI…AIDESLQLLS (125 aa). The propeptide occupies 190–225; sequence IQKVQKNLTKIQQSLKRHSTFQTFIKTLLEIAVEAN. A coiled-coil region spans residues 262–354; sequence KDFEARVIQL…AHQALDLLNQ (93 aa).

This sequence belongs to the TMP family. Two components are produced by post-translational processing from the precursor peptide.

Its subcellular location is the trichocyst. In terms of biological role, structural protein that crystallize inside the trichocyst matrix. This Paramecium tetraurelia protein is Trichocyst matrix protein T1-B (T1B).